The sequence spans 242 residues: MKNRFNSEDKIILAIDGLDLNQAKLLLEKCPSIKWVKVGLELFVREGPRVVEILKGLNKKIFLDLKFHDIPNTMSAACFQVSKLGVDIISVHSSAGLKALQDSKKASLEGASLANLKPPFVVGITVLTSFSLKDFQTDLDRKNSIEDNVLRLAKLSFDAELDGCVCSPWEVKMLRSIYKNNFELITPGIRLKIDNKDDQNRIMTPNEAIDNGASKLVIGRSISKALDPNKALIEIFKSIDSD.

Residues Asp-16, Lys-37, 64 to 73, Thr-128, Arg-190, Gln-199, Gly-219, and Arg-220 each bind substrate; that span reads DLKFHDIPNT. Residue Lys-66 is the Proton donor of the active site.

The protein belongs to the OMP decarboxylase family. Type 1 subfamily. In terms of assembly, homodimer.

The enzyme catalyses orotidine 5'-phosphate + H(+) = UMP + CO2. It participates in pyrimidine metabolism; UMP biosynthesis via de novo pathway; UMP from orotate: step 2/2. Functionally, catalyzes the decarboxylation of orotidine 5'-monophosphate (OMP) to uridine 5'-monophosphate (UMP). The protein is Orotidine 5'-phosphate decarboxylase of Prochlorococcus marinus (strain MIT 9312).